We begin with the raw amino-acid sequence, 398 residues long: Acetate kinase (398 aa).

N9 lines the Mg(2+) pocket. K16 provides a ligand contact to ATP. R93 serves as a coordination point for substrate. Catalysis depends on D150, which acts as the Proton donor/acceptor. ATP is bound by residues H209 to G213, D284 to R286, and G329 to H333. E382 is a binding site for Mg(2+).

It belongs to the acetokinase family. Homodimer. Mg(2+) is required as a cofactor. The cofactor is Mn(2+).

It localises to the cytoplasm. The catalysed reaction is acetate + ATP = acetyl phosphate + ADP. Its pathway is metabolic intermediate biosynthesis; acetyl-CoA biosynthesis; acetyl-CoA from acetate: step 1/2. Functionally, catalyzes the formation of acetyl phosphate from acetate and ATP. Can also catalyze the reverse reaction. This chain is Acetate kinase, found in Rhodopseudomonas palustris (strain TIE-1).